Here is a 740-residue protein sequence, read N- to C-terminus: MNPPGSLAGLDPNLDEHLSTQILAPSVHSDNPQERIQARRLRIAARLEPRRREALGEYLDGKKESEEDQSKSYKQKEESRLKLAKLLLCGTELVTNIQVAIDIREIHRRVEEEEIKRQRIEKLENEVKTSQDKFDEITSKWEEGKQKRIPQELWEMLNTQQLHCAGLLEDKNKLISELQQELKTKDDQYVKDLKKQSDDICLLLERMEEQVKNVMKTFREELYNIEKAFEVERQELLASNKKKWERALQAHNAKELEYLTNRMKKVEDYEKQLNRQRIWDCEEYNTIKIKLEQDVQILEQQLQQRKAIYQLNQEKLEYNLQVLKKRDEESTVIKSQQKRKINRLHDILNNLRSKYAKQIKQFQEENQSLTLDYKRLVLQFKELQKAMRHFALIDDEKFREIWLMNEEEAKDLIARAFDVDRIIHTHHLGLPWTAPDFWFLKNVGPISQQPQKSATQIVEEMLMHTEEEEAEEAASEPESYLDLPKQVSEKTTKKILMLLCDESGFLIESKLLSLLLPLEQNECYLLRLDAIFSALGIESEDDLYKLVNFFLKYRAHRLSSSLQIKSCSQASMEKASMEETSMGSELELAEQTEMEGAKEESLVEGEKEEEEETPPSPWDIHPNDVLKILEAFVMGLKKPRDSRAPPRVQKNMRNNSKDSEYWQALTTVIPSSKQNLWDALYTALEKYHIVLTQRAKLLLENSSLEQRNTELQALLQQYLNSKINSELQVPPTQVLRVPTK.

A disordered region spans residues 56-75; the sequence is GEYLDGKKESEEDQSKSYKQ. Positions 101 to 387 form a coiled coil; it reads IDIREIHRRV…LQFKELQKAM (287 aa). The tract at residues 573-620 is disordered; sequence EKASMEETSMGSELELAEQTEMEGAKEESLVEGEKEEEEETPPSPWDI. A compositionally biased stretch (basic and acidic residues) spans 595–605; sequence EGAKEESLVEG. The stretch at 691-724 forms a coiled coil; sequence LTQRAKLLLENSSLEQRNTELQALLQQYLNSKIN.

This sequence belongs to the DRC1 family. As to quaternary structure, component of the nexin-dynein regulatory complex (N-DRC). Interacts with CCDC65/DRC2, DRC3, GAS8/DRC4 and TCTE1/DRC5.

It is found in the cytoplasm. The protein resides in the cytoskeleton. The protein localises to the cilium axoneme. It localises to the flagellum axoneme. In terms of biological role, component of the nexin-dynein regulatory complex (N-DRC) a key regulator of ciliary/flagellar motility which maintains the alignment and integrity of the distal axoneme and regulates microtubule sliding in motile axonemes. Plays a critical role in the assembly of N-DRC and also stabilizes the assembly of multiple inner dynein arms and radial spokes. Coassembles with CCDC65/DRC2 to form a central scaffold needed for assembly of the N-DRC and its attachment to the outer doublet microtubules. This Macaca fascicularis (Crab-eating macaque) protein is Dynein regulatory complex protein 1 (DRC1).